Reading from the N-terminus, the 262-residue chain is Protein Pcal_0062 (262 aa).

It belongs to the CinA family.

The polypeptide is Protein Pcal_0062 (Pyrobaculum calidifontis (strain DSM 21063 / JCM 11548 / VA1)).